The following is a 295-amino-acid chain: MPKVTDIANELKQAIDAKDEVQIAFIASEYSAESREKIAKAYVASYGKELPDDIKKALKGGSEESLLMDLFSDRHEVRAQHIRDALSGRNDHMAFFDTVILCTPEDWHETVAAYTRMFKKPLVEDFMKDVGRKEDWCLLMEKWMAHERVSRPGSPEDEAQRLDQAFDQKNTAYLIDFFGTVPSAEYRPIAEAFKAQNGKSIEQAIATIYTKTDYYTFYCAHFALLGMHRLAAYLINCACNDKGDEKRMRRITGMMVDKCLGAKHAYKIYGDMGTDIERCFDKRMAPILRTLWRVK.

Annexin repeat units follow at residues 2-71, 73-143, 153-223, and 226-293; these read PKVT…MDLF, DRHE…MEKW, GSPE…AHFA, and GMHR…TLWR.

This sequence belongs to the annexin family. Giardin subunit alpha subfamily.

It is found in the cytoplasm. The protein localises to the cytoskeleton. Giardins are involved in parasite attachment to the intestinal mucosa and in the cytoskeletal disassembly and reassembly that marks the transition from infectious trophozoite to transmissible cyst. They may interact with other cytoskeletal proteins such as microtubules in the microribbons or crossbridges, to maintain the integrity of the ventral disk. The chain is Giardin subunit alpha-1 from Giardia intestinalis (Giardia lamblia).